Reading from the N-terminus, the 329-residue chain is Probable nicotianamine synthase 4 (329 aa).

Belongs to the nicotianamine synthase (NAS)-like family.

It catalyses the reaction 3 S-adenosyl-L-methionine = nicotianamine + 3 S-methyl-5'-thioadenosine + 3 H(+). Synthesizes nicotianamine, a polyamine that is the first intermediate in the synthesis of the phytosiderophores of the mugineic acid type found in gramineae which serves as a sensor for the physiological iron status within the plant, and/or might be involved in the transport of iron. The polypeptide is Probable nicotianamine synthase 4 (NAS4) (Hordeum vulgare (Barley)).